The chain runs to 508 residues: Flavonoid 3',5'-hydroxylase 2 (508 aa).

Heme is bound at residue cysteine 443.

It belongs to the cytochrome P450 family. Requires heme as cofactor. In terms of tissue distribution, flowers.

Its subcellular location is the microsome. The protein resides in the endoplasmic reticulum. The enzyme catalyses a 3',5'-unsubstituted flavanone + 2 reduced [NADPH--hemoprotein reductase] + 2 O2 = a 3',5'-dihydroxyflavanone + 2 oxidized [NADPH--hemoprotein reductase] + 2 H2O + 2 H(+). It participates in pigment biosynthesis; anthocyanin biosynthesis. Its function is as follows. Catalyzes the 3'5'-hydroxylation of naringenin and eriodictyol to form 5,7,3,'4',5'-pentahydroxyflavanone and 3',5'-hydroxylation of dihydrokaempferol and dihydroquercetin to form dihydromyricetin. This Petunia hybrida (Petunia) protein is Flavonoid 3',5'-hydroxylase 2 (CYP75A3).